The chain runs to 420 residues: Annetocin receptor (420 aa).

At 1-54 (MEMDDDEAILLDDIYALASTPNQTIVTSSFPQTVSPGFLARRNEALAMVEVAVQ) the chain is on the extracellular side. Residue Asn22 is glycosylated (N-linked (GlcNAc...) asparagine). The chain crosses the membrane as a helical span at residues 55 to 75 (STILILTVVGNAAVLAMIVSL). The Cytoplasmic portion of the chain corresponds to 76–83 (SRHKDLGR). Residues 84-104 (MYTMIGHLSCADLFVAIFNLL) form a helical membrane-spanning segment. At 105–124 (PQLLWDVTHRFRGGRVLCKL) the chain is on the extracellular side. A disulfide bond links Cys122 and Cys201. A helical transmembrane segment spans residues 125–145 (VKYVQVVAMYASAYVLMSTAV). Over 146 to 166 (DRYTAICHPMRSHTWTSTTAH) the chain is Cytoplasmic. The helical transmembrane segment at 167 to 187 (YLVIGAWVLALVFAVPQLVIF) threads the bilayer. The Extracellular portion of the chain corresponds to 188 to 212 (DYVEVVPGSGVYDCVDHFRPRWTLP). Residues 213–233 (VYITWFALAVYVIPLVVLATI) form a helical membrane-spanning segment. Residues 234–328 (YLRICVVVWK…KTKTVKLTLT (95 aa)) lie on the Cytoplasmic side of the membrane. Residues 329 to 349 (VVISYLVCWAPFFVSHIWSAW) traverse the membrane as a helical segment. Residues 350–360 (DPHAPFEGTEM) lie on the Extracellular side of the membrane. A helical transmembrane segment spans residues 361–381 (VITLLLGSLNSCINPWIYLAF). The Cytoplasmic portion of the chain corresponds to 382–420 (SDQLRRKVTQCCPRSWGQRPSTLSHDSTDFRSGSRPTHS). The disordered stretch occupies residues 397 to 420 (WGQRPSTLSHDSTDFRSGSRPTHS). Residues 399-420 (QRPSTLSHDSTDFRSGSRPTHS) are compositionally biased toward polar residues.

It belongs to the G-protein coupled receptor 1 family. Vasopressin/oxytocin receptor subfamily. Nephridia in clitellum region.

It localises to the cell membrane. In terms of biological role, receptor for annetocin. Activation by annetocin may induce egg-laying behavior through calcium-dependent signaling. In Eisenia fetida (Red wiggler worm), this protein is Annetocin receptor.